Reading from the N-terminus, the 111-residue chain is Cell cycle protein GpsB (111 aa).

The stretch at 32 to 63 forms a coiled coil; it reads LDDIMKDYDAYEAIIKELKGEIARLKAQAANS. The interval 59–80 is disordered; that stretch reads QAANSPKTTLPTEESNDVLRTE. Polar residues predominate over residues 60–71; the sequence is AANSPKTTLPTE.

The protein belongs to the GpsB family. Forms polymers through the coiled coil domains. Interacts with PBP1, MreC and EzrA.

The protein resides in the cytoplasm. Divisome component that associates with the complex late in its assembly, after the Z-ring is formed, and is dependent on DivIC and PBP2B for its recruitment to the divisome. Together with EzrA, is a key component of the system that regulates PBP1 localization during cell cycle progression. Its main role could be the removal of PBP1 from the cell pole after pole maturation is completed. Also contributes to the recruitment of PBP1 to the division complex. Not essential for septum formation. This Streptococcus suis (strain 98HAH33) protein is Cell cycle protein GpsB.